A 292-amino-acid chain; its full sequence is Phosphatidylglycerol--prolipoprotein diacylglyceryl transferase (292 aa).

6 helical membrane passes run 25–45, 70–90, 101–121, 138–158, 193–213, and 255–275; these read IALH…WWYA, FVVW…VLVW, AIIA…GIII, FDIV…CNFI, FMEG…FKAL, and GFTY…YLLL. R153 provides a ligand contact to a 1,2-diacyl-sn-glycero-3-phospho-(1'-sn-glycerol).

It belongs to the Lgt family.

The protein localises to the cell inner membrane. The catalysed reaction is L-cysteinyl-[prolipoprotein] + a 1,2-diacyl-sn-glycero-3-phospho-(1'-sn-glycerol) = an S-1,2-diacyl-sn-glyceryl-L-cysteinyl-[prolipoprotein] + sn-glycerol 1-phosphate + H(+). Its pathway is protein modification; lipoprotein biosynthesis (diacylglyceryl transfer). Its function is as follows. Catalyzes the transfer of the diacylglyceryl group from phosphatidylglycerol to the sulfhydryl group of the N-terminal cysteine of a prolipoprotein, the first step in the formation of mature lipoproteins. This Bartonella quintana (strain Toulouse) (Rochalimaea quintana) protein is Phosphatidylglycerol--prolipoprotein diacylglyceryl transferase.